A 312-amino-acid polypeptide reads, in one-letter code: tRNA dimethylallyltransferase (312 aa).

19–26 (GPSGSGKS) provides a ligand contact to ATP. A substrate-binding site is contributed by 21–26 (SGSGKS). Residues 44–47 (DSLS) are interaction with substrate tRNA.

It belongs to the IPP transferase family. In terms of assembly, monomer. Mg(2+) serves as cofactor.

It catalyses the reaction adenosine(37) in tRNA + dimethylallyl diphosphate = N(6)-dimethylallyladenosine(37) in tRNA + diphosphate. In terms of biological role, catalyzes the transfer of a dimethylallyl group onto the adenine at position 37 in tRNAs that read codons beginning with uridine, leading to the formation of N6-(dimethylallyl)adenosine (i(6)A). The protein is tRNA dimethylallyltransferase of Helicobacter pylori (strain J99 / ATCC 700824) (Campylobacter pylori J99).